The following is a 429-amino-acid chain: Glucose-1-phosphate adenylyltransferase (429 aa).

Alpha-D-glucose 1-phosphate is bound by residues glycine 162, 177-178, and serine 209; that span reads EK.

It belongs to the bacterial/plant glucose-1-phosphate adenylyltransferase family. As to quaternary structure, homotetramer.

The catalysed reaction is alpha-D-glucose 1-phosphate + ATP + H(+) = ADP-alpha-D-glucose + diphosphate. It functions in the pathway glycan biosynthesis; glycogen biosynthesis. In terms of biological role, involved in the biosynthesis of ADP-glucose, a building block required for the elongation reactions to produce glycogen. Catalyzes the reaction between ATP and alpha-D-glucose 1-phosphate (G1P) to produce pyrophosphate and ADP-Glc. The chain is Glucose-1-phosphate adenylyltransferase from Nostoc punctiforme (strain ATCC 29133 / PCC 73102).